A 130-amino-acid polypeptide reads, in one-letter code: Small ribosomal subunit protein uS9 (130 aa).

A disordered region spans residues 102–130 (GLLTRDSRMKERKKPGLKGARRAPQFSKR). Residues 111 to 130 (KERKKPGLKGARRAPQFSKR) show a composition bias toward basic residues.

This sequence belongs to the universal ribosomal protein uS9 family.

This Listeria monocytogenes serovar 1/2a (strain ATCC BAA-679 / EGD-e) protein is Small ribosomal subunit protein uS9.